A 375-amino-acid chain; its full sequence is Dehydrodolichyl diphosphate synthase complex subunit NUS1 (375 aa).

The segment covering 1 to 28 has biased composition (basic and acidic residues); it reads MPTMIKKDDKAMEPPNEKPHRKIERDDV. The segment at 1 to 48 is disordered; sequence MPTMIKKDDKAMEPPNEKPHRKIERDDVPESSNHIPPPESGVLKGGKV. The chain crosses the membrane as a helical span at residues 97 to 119; the sequence is YLFYKFLLVLLYICFGLFRYGQY.

Belongs to the UPP synthase family. Forms an active dehydrodolichyl diphosphate synthase complex with either SRT1 or RER2. Mg(2+) serves as cofactor.

It is found in the endoplasmic reticulum membrane. Its subcellular location is the lipid droplet. The protein localises to the nucleus membrane. It carries out the reaction n isopentenyl diphosphate + (2E,6E)-farnesyl diphosphate = a di-trans,poly-cis-polyprenyl diphosphate + n diphosphate. The protein operates within protein modification; protein glycosylation. In terms of biological role, with SRT1 or RER2, forms the dehydrodolichyl diphosphate synthase (DDS) complex, an essential component of the dolichol monophosphate (Dol-P) biosynthetic machinery. Adds multiple copies of isopentenyl pyrophosphate (IPP) to farnesyl pyrophosphate (FPP) to produce dehydrodolichyl diphosphate (Dedol-PP), a precursor of dolichol which is utilized as a sugar carrier in protein glycosylation in the endoplasmic reticulum (ER). The protein is Dehydrodolichyl diphosphate synthase complex subunit NUS1 (NUS1) of Saccharomyces cerevisiae (strain ATCC 204508 / S288c) (Baker's yeast).